The primary structure comprises 486 residues: Membrane-bound lytic murein transglycosylase F (486 aa).

The N-terminal stretch at 1-26 (MFSPMALRPRCAKWLIVTGLFLMLGA) is a signal peptide. The segment at 27 to 267 (CVEKPSTLER…RLKDRYYGHV (241 aa)) is non-LT domain. The segment at 268–486 (DVLGYVGAYT…TKPPEENPPL (219 aa)) is LT domain. Glutamate 314 is an active-site residue. The disordered stretch occupies residues 464–486 (VAEGNLHVPGVNKTKPPEENPPL).

In the N-terminal section; belongs to the bacterial solute-binding protein 3 family. This sequence in the C-terminal section; belongs to the transglycosylase Slt family.

It localises to the cell outer membrane. It catalyses the reaction Exolytic cleavage of the (1-&gt;4)-beta-glycosidic linkage between N-acetylmuramic acid (MurNAc) and N-acetylglucosamine (GlcNAc) residues in peptidoglycan, from either the reducing or the non-reducing ends of the peptidoglycan chains, with concomitant formation of a 1,6-anhydrobond in the MurNAc residue.. In terms of biological role, murein-degrading enzyme that degrades murein glycan strands and insoluble, high-molecular weight murein sacculi, with the concomitant formation of a 1,6-anhydromuramoyl product. Lytic transglycosylases (LTs) play an integral role in the metabolism of the peptidoglycan (PG) sacculus. Their lytic action creates space within the PG sacculus to allow for its expansion as well as for the insertion of various structures such as secretion systems and flagella. The chain is Membrane-bound lytic murein transglycosylase F from Pseudomonas fluorescens (strain ATCC BAA-477 / NRRL B-23932 / Pf-5).